Consider the following 448-residue polypeptide: Elongation factor 1-alpha (448 aa).

In terms of domain architecture, tr-type G spans 5-230; it reads KIHISIVVIG…DQINEPKRPS (226 aa). The segment at 14-21 is G1; the sequence is GHVDSGKS. 14–21 contributes to the GTP binding site; that stretch reads GHVDSGKS. An N6,N6-dimethyllysine modification is found at K55. A G2 region spans residues 70 to 74; the sequence is GITID. K79 carries the post-translational modification N6,N6,N6-trimethyllysine. A G3 region spans residues 91–94; sequence DAPG. GTP contacts are provided by residues 91-95 and 153-156; these read DAPGH and NKMD. The segment at 153-156 is G4; the sequence is NKMD. K187 bears the N6,N6,N6-trimethyllysine mark. Residues 194–196 are G5; that stretch reads SGF. Position 261 is an N6-methyllysine (K261). E289 is modified (5-glutamyl glycerylphosphorylethanolamine). An N6,N6,N6-trimethyllysine modification is found at K306. Position 362 is a 5-glutamyl glycerylphosphorylethanolamine (E362). K396 carries the post-translational modification N6,N6,N6-trimethyllysine.

Belongs to the TRAFAC class translation factor GTPase superfamily. Classic translation factor GTPase family. EF-Tu/EF-1A subfamily.

The protein resides in the cytoplasm. Functionally, this protein promotes the GTP-dependent binding of aminoacyl-tRNA to the A-site of ribosomes during protein biosynthesis. This is Elongation factor 1-alpha from Solanum lycopersicum (Tomato).